The sequence spans 356 residues: 5-formaminoimidazole-4-carboxamide-1-(beta)-D-ribofuranosyl 5'-monophosphate synthetase (356 aa).

5-amino-1-(5-phospho-beta-D-ribosyl)imidazole-4-carboxamide-binding residues include His27 and Ser94. Residues 101-333 form the ATP-grasp domain; sequence TENFADMAVP…YADLMEENLS (233 aa). ATP is bound by residues 145-196 and Glu226; that span reads PHDI…TRYY. Residue Asn255 coordinates 5-amino-1-(5-phospho-beta-D-ribosyl)imidazole-4-carboxamide. Glu293 and Glu306 together coordinate Mg(2+).

This sequence belongs to the phosphohexose mutase family. The cofactor is Mg(2+). Mn(2+) serves as cofactor.

The enzyme catalyses 5-amino-1-(5-phospho-beta-D-ribosyl)imidazole-4-carboxamide + formate + ATP = 5-formamido-1-(5-phospho-D-ribosyl)imidazole-4-carboxamide + ADP + phosphate. It functions in the pathway purine metabolism; IMP biosynthesis via de novo pathway; 5-formamido-1-(5-phospho-D-ribosyl)imidazole-4-carboxamide from 5-amino-1-(5-phospho-D-ribosyl)imidazole-4-carboxamide (formate route): step 1/1. In terms of biological role, catalyzes the ATP- and formate-dependent formylation of 5-aminoimidazole-4-carboxamide-1-beta-d-ribofuranosyl 5'-monophosphate (AICAR) to 5-formaminoimidazole-4-carboxamide-1-beta-d-ribofuranosyl 5'-monophosphate (FAICAR) in the absence of folates. The protein is 5-formaminoimidazole-4-carboxamide-1-(beta)-D-ribofuranosyl 5'-monophosphate synthetase of Methanosarcina barkeri (strain Fusaro / DSM 804).